The sequence spans 218 residues: LOB domain-containing protein 29 (218 aa).

The region spanning 10-112 is the LOB domain; the sequence is SPCGACKFLR…AELEILKQQA (103 aa).

This sequence belongs to the LOB domain-containing protein family. Expressed in roots.

In terms of biological role, involved in lateral root formation. Regulated by the transcriptional activators ARF7 and ARF19. The polypeptide is LOB domain-containing protein 29 (LBD29) (Arabidopsis thaliana (Mouse-ear cress)).